The following is a 441-amino-acid chain: Protein dcd1A (441 aa).

An N-terminal signal peptide occupies residues 1–23 (MKIFNKLIFLIIQCILIISVTNA). N-linked (GlcNAc...) asparagine glycosylation is found at asparagine 45, asparagine 261, asparagine 308, and asparagine 419.

Its subcellular location is the secreted. This Dictyostelium discoideum (Social amoeba) protein is Protein dcd1A (dcd1A).